The following is a 366-amino-acid chain: Anthranilate phosphoribosyltransferase (366 aa).

Residues Gly-79, Gly-82–Asp-83, Thr-87, Asn-89–Thr-92, Lys-107–Ser-115, and Ser-119 each bind 5-phospho-alpha-D-ribose 1-diphosphate. Residue Gly-79 coordinates anthranilate. Ser-91 lines the Mg(2+) pocket. Asn-110 serves as a coordination point for anthranilate. Arg-165 provides a ligand contact to anthranilate. Mg(2+) is bound by residues Asp-223 and Glu-224. Positions Glu-342 to Val-366 are disordered. Residues Ser-345–Ser-359 show a composition bias toward polar residues.

This sequence belongs to the anthranilate phosphoribosyltransferase family. As to quaternary structure, homodimer. It depends on Mg(2+) as a cofactor.

It carries out the reaction N-(5-phospho-beta-D-ribosyl)anthranilate + diphosphate = 5-phospho-alpha-D-ribose 1-diphosphate + anthranilate. It functions in the pathway amino-acid biosynthesis; L-tryptophan biosynthesis; L-tryptophan from chorismate: step 2/5. Its function is as follows. Catalyzes the transfer of the phosphoribosyl group of 5-phosphorylribose-1-pyrophosphate (PRPP) to anthranilate to yield N-(5'-phosphoribosyl)-anthranilate (PRA). The protein is Anthranilate phosphoribosyltransferase of Methanosarcina barkeri (strain Fusaro / DSM 804).